The sequence spans 210 residues: Riboflavin kinase (210 aa).

Over residues 1–11 (MRPSNPRPPVT) the composition is skewed to pro residues. Positions 1–24 (MRPSNPRPPVTGPDSGPEAPFPIR) are disordered. Residues T44 and N46 each coordinate Mg(2+). The Nucleophile role is filled by E113.

This sequence belongs to the flavokinase family. Zn(2+) serves as cofactor. The cofactor is Mg(2+).

The catalysed reaction is riboflavin + ATP = FMN + ADP + H(+). Its pathway is cofactor biosynthesis; FMN biosynthesis; FMN from riboflavin (ATP route): step 1/1. Functionally, catalyzes the phosphorylation of riboflavin (vitamin B2) to form flavin mononucleotide (FMN) coenzyme. This chain is Riboflavin kinase (fmn1), found in Emericella nidulans (strain FGSC A4 / ATCC 38163 / CBS 112.46 / NRRL 194 / M139) (Aspergillus nidulans).